A 371-amino-acid polypeptide reads, in one-letter code: Carbamoyl phosphate synthase small chain (371 aa).

The CPSase stretch occupies residues 1–182 (MGVHKKGYLV…KNPIVHTPKN (182 aa)). L-glutamine contacts are provided by serine 49, glycine 235, and glycine 237. The 186-residue stretch at 186–371 (RVVVLDLGVK…EFVKILEGRK (186 aa)) folds into the Glutamine amidotransferase type-1 domain. The Nucleophile role is filled by cysteine 263. 5 residues coordinate L-glutamine: leucine 264, glutamine 267, asparagine 305, glycine 307, and tyrosine 308. Active-site residues include histidine 346 and glutamate 348.

The protein belongs to the CarA family. Composed of two chains; the small (or glutamine) chain promotes the hydrolysis of glutamine to ammonia, which is used by the large (or ammonia) chain to synthesize carbamoyl phosphate. Tetramer of heterodimers (alpha,beta)4.

It catalyses the reaction hydrogencarbonate + L-glutamine + 2 ATP + H2O = carbamoyl phosphate + L-glutamate + 2 ADP + phosphate + 2 H(+). The enzyme catalyses L-glutamine + H2O = L-glutamate + NH4(+). It participates in amino-acid biosynthesis; L-arginine biosynthesis; carbamoyl phosphate from bicarbonate: step 1/1. Its pathway is pyrimidine metabolism; UMP biosynthesis via de novo pathway; (S)-dihydroorotate from bicarbonate: step 1/3. Functionally, small subunit of the glutamine-dependent carbamoyl phosphate synthetase (CPSase). CPSase catalyzes the formation of carbamoyl phosphate from the ammonia moiety of glutamine, carbonate, and phosphate donated by ATP, constituting the first step of 2 biosynthetic pathways, one leading to arginine and/or urea and the other to pyrimidine nucleotides. The small subunit (glutamine amidotransferase) binds and cleaves glutamine to supply the large subunit with the substrate ammonia. In Pyrococcus furiosus (strain ATCC 43587 / DSM 3638 / JCM 8422 / Vc1), this protein is Carbamoyl phosphate synthase small chain.